Reading from the N-terminus, the 169-residue chain is Peptide deformylase 1 (169 aa).

Cysteine 91 and histidine 133 together coordinate Fe cation. The active site involves glutamate 134. Histidine 137 contacts Fe cation.

It belongs to the polypeptide deformylase family. The cofactor is Fe(2+).

The catalysed reaction is N-terminal N-formyl-L-methionyl-[peptide] + H2O = N-terminal L-methionyl-[peptide] + formate. Its function is as follows. Removes the formyl group from the N-terminal Met of newly synthesized proteins. Requires at least a dipeptide for an efficient rate of reaction. N-terminal L-methionine is a prerequisite for activity but the enzyme has broad specificity at other positions. The chain is Peptide deformylase 1 from Vibrio cholerae serotype O1 (strain ATCC 39315 / El Tor Inaba N16961).